Reading from the N-terminus, the 398-residue chain is Acetate kinase (398 aa).

Asparagine 7 contacts Mg(2+). An ATP-binding site is contributed by lysine 14. Arginine 91 is a substrate binding site. Aspartate 148 acts as the Proton donor/acceptor in catalysis. ATP is bound by residues 208-212, 283-285, and 331-335; these read HLGNG, DFR, and GLGEN. Residue glutamate 384 participates in Mg(2+) binding.

This sequence belongs to the acetokinase family. In terms of assembly, homodimer. Mg(2+) is required as a cofactor. Requires Mn(2+) as cofactor.

Its subcellular location is the cytoplasm. The catalysed reaction is acetate + ATP = acetyl phosphate + ADP. It participates in metabolic intermediate biosynthesis; acetyl-CoA biosynthesis; acetyl-CoA from acetate: step 1/2. Functionally, catalyzes the formation of acetyl phosphate from acetate and ATP. Can also catalyze the reverse reaction. The protein is Acetate kinase of Natranaerobius thermophilus (strain ATCC BAA-1301 / DSM 18059 / JW/NM-WN-LF).